Here is a 78-residue protein sequence, read N- to C-terminus: uncharacterized protein (78 aa).

2 helical membrane passes run 5-24 (LALL…IKLM) and 39-61 (LWLQ…AGFI).

It localises to the cell membrane. This is an uncharacterized protein from Bacillus subtilis (strain 168).